A 329-amino-acid polypeptide reads, in one-letter code: GTP 3',8-cyclase (329 aa).

The Radical SAM core domain occupies Ala-8–Ala-234. Arg-17 lines the GTP pocket. Residues Cys-24 and Cys-28 each coordinate [4Fe-4S] cluster. Tyr-30 lines the S-adenosyl-L-methionine pocket. Position 31 (Cys-31) interacts with [4Fe-4S] cluster. GTP is bound at residue Arg-68. Position 72 (Gly-72) interacts with S-adenosyl-L-methionine. Thr-99 provides a ligand contact to GTP. Ser-123 contributes to the S-adenosyl-L-methionine binding site. Position 160 (Lys-160) interacts with GTP. Position 194 (Met-194) interacts with S-adenosyl-L-methionine. The [4Fe-4S] cluster site is built by Cys-257 and Cys-260. Arg-262–Arg-264 is a GTP binding site. Cys-274 is a binding site for [4Fe-4S] cluster.

This sequence belongs to the radical SAM superfamily. MoaA family. In terms of assembly, monomer and homodimer. [4Fe-4S] cluster serves as cofactor.

The catalysed reaction is GTP + AH2 + S-adenosyl-L-methionine = (8S)-3',8-cyclo-7,8-dihydroguanosine 5'-triphosphate + 5'-deoxyadenosine + L-methionine + A + H(+). Its pathway is cofactor biosynthesis; molybdopterin biosynthesis. Its function is as follows. Catalyzes the cyclization of GTP to (8S)-3',8-cyclo-7,8-dihydroguanosine 5'-triphosphate. In Shigella sonnei (strain Ss046), this protein is GTP 3',8-cyclase.